The sequence spans 455 residues: Bifunctional protein GlmU (455 aa).

Residues 1–228 (MTQPLHVIIL…AQEAEGANDP (228 aa)) form a pyrophosphorylase region. UDP-N-acetyl-alpha-D-glucosamine is bound by residues 10 to 13 (LAAG), Lys24, Gln76, 81 to 82 (GT), 103 to 105 (YGD), Gly138, Glu153, Asn168, and Asn226. Residue Asp105 coordinates Mg(2+). Position 226 (Asn226) interacts with Mg(2+). Residues 229–249 (WQLSQLERAWQRRAVRALCAQ) form a linker region. The interval 250–455 (GARVRDPARL…DGWKRPLKKS (206 aa)) is N-acetyltransferase. Arg332 and Lys350 together coordinate UDP-N-acetyl-alpha-D-glucosamine. His362 functions as the Proton acceptor in the catalytic mechanism. UDP-N-acetyl-alpha-D-glucosamine-binding residues include Tyr365 and Asn376. Acetyl-CoA is bound by residues Ala379, 385 to 386 (NY), Ser404, Ala422, and Arg439.

This sequence in the N-terminal section; belongs to the N-acetylglucosamine-1-phosphate uridyltransferase family. In the C-terminal section; belongs to the transferase hexapeptide repeat family. Homotrimer. Mg(2+) is required as a cofactor.

Its subcellular location is the cytoplasm. It catalyses the reaction alpha-D-glucosamine 1-phosphate + acetyl-CoA = N-acetyl-alpha-D-glucosamine 1-phosphate + CoA + H(+). It carries out the reaction N-acetyl-alpha-D-glucosamine 1-phosphate + UTP + H(+) = UDP-N-acetyl-alpha-D-glucosamine + diphosphate. It functions in the pathway nucleotide-sugar biosynthesis; UDP-N-acetyl-alpha-D-glucosamine biosynthesis; N-acetyl-alpha-D-glucosamine 1-phosphate from alpha-D-glucosamine 6-phosphate (route II): step 2/2. Its pathway is nucleotide-sugar biosynthesis; UDP-N-acetyl-alpha-D-glucosamine biosynthesis; UDP-N-acetyl-alpha-D-glucosamine from N-acetyl-alpha-D-glucosamine 1-phosphate: step 1/1. It participates in bacterial outer membrane biogenesis; LPS lipid A biosynthesis. Catalyzes the last two sequential reactions in the de novo biosynthetic pathway for UDP-N-acetylglucosamine (UDP-GlcNAc). The C-terminal domain catalyzes the transfer of acetyl group from acetyl coenzyme A to glucosamine-1-phosphate (GlcN-1-P) to produce N-acetylglucosamine-1-phosphate (GlcNAc-1-P), which is converted into UDP-GlcNAc by the transfer of uridine 5-monophosphate (from uridine 5-triphosphate), a reaction catalyzed by the N-terminal domain. The protein is Bifunctional protein GlmU of Stenotrophomonas maltophilia (strain K279a).